We begin with the raw amino-acid sequence, 147 residues long: Phospholipase A2 inhibitor subunit B (147 aa).

In terms of domain architecture, C-type lectin spans 62–143 (EICEEAGGHI…DEKLLVVCEF (82 aa)). 2 disulfides stabilise this stretch: Cys-64/Cys-141 and Cys-119/Cys-133. N-linked (GlcNAc...) asparagine glycosylation is present at Asn-103.

This sequence belongs to the alpha-type phospholipase A2 inhibitor family. Homo- or heterotrimer; homotrimer of PLI-A chains, two PLI-A and one PLI-B chains, one PLI-A and two PLI-B chains, and homotrimer of PLI-B chains (with a ratio of 1:3:3:1). Expressed by the liver.

It localises to the secreted. In terms of biological role, PLI binds directly phospholipase A2 in the presence or absence of calcium. Inhibitory activity of the PLI-B homotrimer is less specific than that of the PLI-A homotrimer. This Protobothrops flavoviridis (Habu) protein is Phospholipase A2 inhibitor subunit B.